The sequence spans 294 residues: 4-hydroxy-tetrahydrodipicolinate synthase (294 aa).

Thr-47 is a binding site for pyruvate. Tyr-135 (proton donor/acceptor) is an active-site residue. Lys-163 acts as the Schiff-base intermediate with substrate in catalysis. Thr-205 lines the pyruvate pocket.

This sequence belongs to the DapA family. In terms of assembly, homotetramer; dimer of dimers.

It is found in the cytoplasm. The enzyme catalyses L-aspartate 4-semialdehyde + pyruvate = (2S,4S)-4-hydroxy-2,3,4,5-tetrahydrodipicolinate + H2O + H(+). It functions in the pathway amino-acid biosynthesis; L-lysine biosynthesis via DAP pathway; (S)-tetrahydrodipicolinate from L-aspartate: step 3/4. In terms of biological role, catalyzes the condensation of (S)-aspartate-beta-semialdehyde [(S)-ASA] and pyruvate to 4-hydroxy-tetrahydrodipicolinate (HTPA). The chain is 4-hydroxy-tetrahydrodipicolinate synthase from Rickettsia africae (strain ESF-5).